The following is a 458-amino-acid chain: Ammonium transporter Rh type B (458 aa).

Topologically, residues 1–11 are cytoplasmic; the sequence is MTDAATNMRLK. The chain crosses the membrane as a helical span at residues 12–32; it reads LPITCFILEIILIILFGTLVQ. At 33 to 58 the chain is on the extracellular side; the sequence is YDYETDAKEWHNTSHQDYENDFYFRY. N44 carries an N-linked (GlcNAc...) asparagine glycan. A helical transmembrane segment spans residues 59–79; that stretch reads PSFQDVHVMIFVGFGFLMTFL. The Cytoplasmic segment spans residues 80 to 83; the sequence is QRYG. A helical membrane pass occupies residues 84-104; that stretch reads FGSVGFNFLIAAFSLQWATLM. Over 105-121 the chain is Extracellular; that stretch reads QGFFHGMHGGKIHIGVE. The helical transmembrane segment at 122–142 threads the bilayer; that stretch reads SMINADFCTGSVLISFGAVLG. The Cytoplasmic portion of the chain corresponds to 143-151; it reads KTSPIQLLT. A helical transmembrane segment spans residues 152–172; that stretch reads MAIFEVTLFAVNEFILLSLLG. Over 173–176 the chain is Extracellular; that stretch reads TKDA. A helical transmembrane segment spans residues 177-197; sequence GGSMTIHTFGAYFGLMVTRIL. At 198-216 the chain is on the cytoplasmic side; it reads YRPNLDKSKHRNSSVYHSD. Residues 217-237 form a helical membrane-spanning segment; that stretch reads LFAMIGTVYLWMFWPSFNSAI. At 238-247 the chain is on the extracellular side; sequence TAHGDDQHRT. A helical membrane pass occupies residues 248–270; that stretch reads ALNTYYSLAACTLATYGMSAITS. The Cytoplasmic portion of the chain corresponds to 271-274; it reads HDGK. The chain crosses the membrane as a helical span at residues 275–295; it reads LDMVHIQNAALAGGVAVGTAG. At 296–298 the chain is on the extracellular side; it reads EMM. The chain crosses the membrane as a helical span at residues 299-319; it reads LTPFGSMIVGFMAGIISVLGF. The Cytoplasmic portion of the chain corresponds to 320 to 340; sequence KFLSPILEDKLKIQDTCGIHN. Residues 341-361 form a helical membrane-spanning segment; it reads LHGMPGVLGAIVGAVTAALAT. The Extracellular portion of the chain corresponds to 362-391; sequence TDVYGQGMADVFPAVADGSVNATKQGGIQA. A helical membrane pass occupies residues 392 to 412; that stretch reads LSLAITLGIAVLGGLIVGFVL. Residues 413–458 lie on the Cytoplasmic side of the membrane; it reads KLPVFGTPPDTLCFEDSVYWEVPGSESPEEGELTSVKPEETEHLNS. Residues 436–458 are disordered; that stretch reads GSESPEEGELTSVKPEETEHLNS. The segment covering 449 to 458 has biased composition (basic and acidic residues); it reads KPEETEHLNS.

The protein belongs to the ammonium transporter (TC 2.A.49) family. Rh subfamily. As to expression, specifically expressed in the gill by pavement cells (at protein level).

It is found in the apicolateral cell membrane. The protein resides in the cytoplasmic vesicle membrane. Its function is as follows. Functions as an ammonia transporter. May play a role in the elimination of ammonia in the gill. This chain is Ammonium transporter Rh type B (rhbg), found in Takifugu rubripes (Japanese pufferfish).